The sequence spans 208 residues: FMN-dependent NADH:quinone oxidoreductase 1 (208 aa).

Belongs to the azoreductase type 1 family. As to quaternary structure, homodimer. The cofactor is FMN.

It carries out the reaction 2 a quinone + NADH + H(+) = 2 a 1,4-benzosemiquinone + NAD(+). The enzyme catalyses N,N-dimethyl-1,4-phenylenediamine + anthranilate + 2 NAD(+) = 2-(4-dimethylaminophenyl)diazenylbenzoate + 2 NADH + 2 H(+). In terms of biological role, quinone reductase that provides resistance to thiol-specific stress caused by electrophilic quinones. Also exhibits azoreductase activity. Catalyzes the reductive cleavage of the azo bond in aromatic azo compounds to the corresponding amines. This Bacillus cereus (strain ATCC 14579 / DSM 31 / CCUG 7414 / JCM 2152 / NBRC 15305 / NCIMB 9373 / NCTC 2599 / NRRL B-3711) protein is FMN-dependent NADH:quinone oxidoreductase 1.